The following is a 644-amino-acid chain: 1,4-alpha-glucan branching enzyme GlgB (644 aa).

The Nucleophile role is filled by Asp309. Glu362 serves as the catalytic Proton donor.

The protein belongs to the glycosyl hydrolase 13 family. GlgB subfamily. Monomer.

It catalyses the reaction Transfers a segment of a (1-&gt;4)-alpha-D-glucan chain to a primary hydroxy group in a similar glucan chain.. Its pathway is glycan biosynthesis; glycogen biosynthesis. Catalyzes the formation of the alpha-1,6-glucosidic linkages in glycogen by scission of a 1,4-alpha-linked oligosaccharide from growing alpha-1,4-glucan chains and the subsequent attachment of the oligosaccharide to the alpha-1,6 position. The protein is 1,4-alpha-glucan branching enzyme GlgB of Cutibacterium acnes (strain DSM 16379 / KPA171202) (Propionibacterium acnes).